The primary structure comprises 388 residues: AT-rich binding protein (388 aa).

The C2H2-type 1 zinc-finger motif lies at 29–52; it reads IVCHTCQEELQTQDQFWKHIQDEH. Composition is skewed to low complexity over residues 138–165 and 249–265; these read QQHQ…LQQQ and VSVS…STTP. Disordered stretches follow at residues 138–168 and 240–265; these read QQHQ…QRDV and PPPP…STTP. 2 C2H2-type zinc fingers span residues 321-345 and 351-374; these read YVCD…RVVH and FNCE…KKKH.

The protein resides in the nucleus. Functionally, may be a transcription factor for genes having (A+T) stretches in their promoter and/or enhancer regions. Binds to AT rich DNA. The polypeptide is AT-rich binding protein (Drosophila melanogaster (Fruit fly)).